The chain runs to 411 residues: C6 finger domain transcription factor hasA (411 aa).

Residues 1–17 are compositionally biased toward polar residues; that stretch reads MTSTLPYLTSPPATHPS. Residues 1–21 are disordered; the sequence is MTSTLPYLTSPPATHPSNSDH. The zn(2)-C6 fungal-type DNA-binding region spans 28–54; it reads CDSCHQCKVKCSGGSPCFRCTSKGLNC.

The protein resides in the nucleus. Functionally, transcription factor; part of the gene cluster that mediates the biosynthesis of hexadehydro-astechrome (HAS), a tryptophan-derived iron(III)-complex that acts as a virulence factor in infected mice. Positively regulates the expression of the HAS biosynthetic genes. The polypeptide is C6 finger domain transcription factor hasA (Aspergillus fumigatus (strain CBS 144.89 / FGSC A1163 / CEA10) (Neosartorya fumigata)).